A 376-amino-acid chain; its full sequence is N-acetyldiaminopimelate deacetylase (376 aa).

The active site involves Asp-69. Residue Glu-128 is the Proton acceptor of the active site.

Belongs to the peptidase M20A family. N-acetyldiaminopimelate deacetylase subfamily.

The enzyme catalyses N-acetyl-(2S,6S)-2,6-diaminopimelate + H2O = (2S,6S)-2,6-diaminopimelate + acetate. It participates in amino-acid biosynthesis; L-lysine biosynthesis via DAP pathway; LL-2,6-diaminopimelate from (S)-tetrahydrodipicolinate (acetylase route): step 3/3. Its function is as follows. Catalyzes the conversion of N-acetyl-diaminopimelate to diaminopimelate and acetate. In Bacillus thuringiensis subsp. konkukian (strain 97-27), this protein is N-acetyldiaminopimelate deacetylase.